The chain runs to 1125 residues: Probable inorganic carbon transporter subunit DabA (1125 aa).

Zn(2+) is bound by residues Cys-578, Asp-580, His-769, and Cys-784. Positions 1106-1125 (SDPRPPALVEPKQTETHHAA) are disordered.

The protein belongs to the inorganic carbon transporter (TC 9.A.2) DabA family. Forms a complex with DabB. Zn(2+) is required as a cofactor.

Its subcellular location is the cell inner membrane. Its function is as follows. Part of an energy-coupled inorganic carbon pump. The protein is Probable inorganic carbon transporter subunit DabA of Nitrosococcus oceani (strain ATCC 19707 / BCRC 17464 / JCM 30415 / NCIMB 11848 / C-107).